Consider the following 92-residue polypeptide: Small ribosomal subunit protein uS19 (92 aa).

This sequence belongs to the universal ribosomal protein uS19 family.

Its function is as follows. Protein S19 forms a complex with S13 that binds strongly to the 16S ribosomal RNA. This chain is Small ribosomal subunit protein uS19, found in Nitrobacter hamburgensis (strain DSM 10229 / NCIMB 13809 / X14).